The following is a 129-amino-acid chain: uncharacterized protein (129 aa).

Residues 34-57 form a disordered region; that stretch reads SAPLRPPRELHAAPPPATPTQTVV.

This is an uncharacterized protein from Homo sapiens (Human).